Here is a 907-residue protein sequence, read N- to C-terminus: Phosphoenolpyruvate carboxylase (907 aa).

Residues H138 and K570 contribute to the active site.

The protein belongs to the PEPCase type 1 family. Requires Mg(2+) as cofactor.

It catalyses the reaction oxaloacetate + phosphate = phosphoenolpyruvate + hydrogencarbonate. Functionally, forms oxaloacetate, a four-carbon dicarboxylic acid source for the tricarboxylic acid cycle. The protein is Phosphoenolpyruvate carboxylase of Streptococcus mutans serotype c (strain ATCC 700610 / UA159).